The chain runs to 276 residues: B3 domain-containing protein REM22 (276 aa).

Positions 11 to 115 (SETMSIQDTV…VFHFCVYEYG (105 aa)) form a DNA-binding region, TF-B3. Positions 141-164 (GNEESTKGLEESPRRGGTSRRRAK) are disordered. The segment covering 144 to 154 (ESTKGLEESPR) has biased composition (basic and acidic residues).

The protein resides in the nucleus. In Arabidopsis thaliana (Mouse-ear cress), this protein is B3 domain-containing protein REM22 (REM22).